The following is a 336-amino-acid chain: 4-hydroxy-3-methylbut-2-enyl diphosphate reductase (336 aa).

Cysteine 37 serves as a coordination point for [4Fe-4S] cluster. (2E)-4-hydroxy-3-methylbut-2-enyl diphosphate contacts are provided by histidine 66 and histidine 99. Dimethylallyl diphosphate is bound by residues histidine 66 and histidine 99. Residues histidine 66 and histidine 99 each contribute to the isopentenyl diphosphate site. Cysteine 121 contributes to the [4Fe-4S] cluster binding site. Histidine 149 contacts (2E)-4-hydroxy-3-methylbut-2-enyl diphosphate. Residue histidine 149 coordinates dimethylallyl diphosphate. An isopentenyl diphosphate-binding site is contributed by histidine 149. The active-site Proton donor is the glutamate 151. Threonine 189 provides a ligand contact to (2E)-4-hydroxy-3-methylbut-2-enyl diphosphate. Cysteine 219 serves as a coordination point for [4Fe-4S] cluster. 4 residues coordinate (2E)-4-hydroxy-3-methylbut-2-enyl diphosphate: serine 247, serine 248, asparagine 249, and serine 292. Positions 247, 248, 249, and 292 each coordinate dimethylallyl diphosphate. The isopentenyl diphosphate site is built by serine 247, serine 248, asparagine 249, and serine 292.

It belongs to the IspH family. It depends on [4Fe-4S] cluster as a cofactor.

It carries out the reaction isopentenyl diphosphate + 2 oxidized [2Fe-2S]-[ferredoxin] + H2O = (2E)-4-hydroxy-3-methylbut-2-enyl diphosphate + 2 reduced [2Fe-2S]-[ferredoxin] + 2 H(+). The catalysed reaction is dimethylallyl diphosphate + 2 oxidized [2Fe-2S]-[ferredoxin] + H2O = (2E)-4-hydroxy-3-methylbut-2-enyl diphosphate + 2 reduced [2Fe-2S]-[ferredoxin] + 2 H(+). Its pathway is isoprenoid biosynthesis; dimethylallyl diphosphate biosynthesis; dimethylallyl diphosphate from (2E)-4-hydroxy-3-methylbutenyl diphosphate: step 1/1. It functions in the pathway isoprenoid biosynthesis; isopentenyl diphosphate biosynthesis via DXP pathway; isopentenyl diphosphate from 1-deoxy-D-xylulose 5-phosphate: step 6/6. Catalyzes the conversion of 1-hydroxy-2-methyl-2-(E)-butenyl 4-diphosphate (HMBPP) into a mixture of isopentenyl diphosphate (IPP) and dimethylallyl diphosphate (DMAPP). Acts in the terminal step of the DOXP/MEP pathway for isoprenoid precursor biosynthesis. This Rhodococcus opacus (strain B4) protein is 4-hydroxy-3-methylbut-2-enyl diphosphate reductase.